The chain runs to 401 residues: All trans-polyprenyl-diphosphate synthase PDSS2 (401 aa).

The protein belongs to the FPP/GGPP synthase family. Heterotetramer composed of 2 PDSS1/DPS1 and 2 PDSS2/DLP1 subunits.

It is found in the mitochondrion. It catalyses the reaction 7 isopentenyl diphosphate + (2E,6E)-farnesyl diphosphate = all-trans-decaprenyl diphosphate + 7 diphosphate. The enzyme catalyses 6 isopentenyl diphosphate + (2E,6E)-farnesyl diphosphate = all-trans-nonaprenyl diphosphate + 6 diphosphate. Its pathway is cofactor biosynthesis; ubiquinone biosynthesis. Functionally, heterotetrameric enzyme that catalyzes the condensation of farnesyl diphosphate (FPP), which acts as a primer, and isopentenyl diphosphate (IPP) to produce prenyl diphosphates of varying chain lengths and participates in the determination of the side chain of ubiquinone. Supplies nona and decaprenyl diphosphate, the precursors for the side chain of the isoprenoid quinones ubiquinone-9 (Q9) and ubiquinone-10 (Q10) respectively. The enzyme adds isopentenyl diphosphate molecules sequentially to farnesyl diphosphate with trans stereochemistry. May play a role during cerebellar development. May regulate mitochondrial respiratory chain function. The chain is All trans-polyprenyl-diphosphate synthase PDSS2 from Mus musculus (Mouse).